The following is a 259-amino-acid chain: MSRREDGRLDDELRPVVITRGFTSHPAGSVLVEFGQTRVMCTASVTEGVPRWRKGSGQGWLTAEYAMLPAATHDRSDRESVKGRIGGRTQEISRLIGRSLRACIDLAALGENTIAIDCDVLQADGGTRTAAITGAYVALSDAVTWLAAAGRLSDPRPLSCAIAAVSVGVVDGRVRVDLPYSEDSRAEVDMNVVATDTGTLVEIQGTGEGATFPRSTLDKMLDAALGATEQLFVLQREALDAPYPGVLPEGPAPKKAFGS.

Phosphate contacts are provided by residues arginine 88 and 126–128 (GTR).

It belongs to the RNase PH family. Homohexameric ring arranged as a trimer of dimers.

The enzyme catalyses tRNA(n+1) + phosphate = tRNA(n) + a ribonucleoside 5'-diphosphate. Phosphorolytic 3'-5' exoribonuclease that plays an important role in tRNA 3'-end maturation. Removes nucleotide residues following the 3'-CCA terminus of tRNAs; can also add nucleotides to the ends of RNA molecules by using nucleoside diphosphates as substrates, but this may not be physiologically important. Probably plays a role in initiation of 16S rRNA degradation (leading to ribosome degradation) during starvation. This is Ribonuclease PH from Mycolicibacterium smegmatis (strain ATCC 700084 / mc(2)155) (Mycobacterium smegmatis).